Here is a 359-residue protein sequence, read N- to C-terminus: Photosystem II protein D1 2 (359 aa).

3 consecutive transmembrane segments (helical) span residues 29–46 (YVGW…AATT), 118–133 (HFLI…EWEL), and 142–156 (WICV…AASA). Histidine 118 provides a ligand contact to chlorophyll a. Pheophytin a is bound at residue tyrosine 126. Residues aspartate 170 and glutamate 189 each contribute to the [CaMn4O5] cluster site. The helical transmembrane segment at 197–218 (FHMLGVAGVFGGSLFSAMHGSL) threads the bilayer. Histidine 198 provides a ligand contact to chlorophyll a. A quinone is bound by residues histidine 215 and 264-265 (SF). Histidine 215 contacts Fe cation. Residue histidine 272 participates in Fe cation binding. A helical transmembrane segment spans residues 274 to 288 (FLAAWPVVGIWFTAL). Residues histidine 332, glutamate 333, aspartate 342, and alanine 344 each contribute to the [CaMn4O5] cluster site. The propeptide occupies 345–359 (AAESTPVALQAPAIG).

It belongs to the reaction center PufL/M/PsbA/D family. PSII is composed of 1 copy each of membrane proteins PsbA, PsbB, PsbC, PsbD, PsbE, PsbF, PsbH, PsbI, PsbJ, PsbK, PsbL, PsbM, PsbT, PsbX, PsbY, PsbZ, Psb30/Ycf12, peripheral proteins PsbO, CyanoQ (PsbQ), PsbU, PsbV and a large number of cofactors. It forms dimeric complexes. It depends on The D1/D2 heterodimer binds P680, chlorophylls that are the primary electron donor of PSII, and subsequent electron acceptors. It shares a non-heme iron and each subunit binds pheophytin, quinone, additional chlorophylls, carotenoids and lipids. D1 provides most of the ligands for the Mn4-Ca-O5 cluster of the oxygen-evolving complex (OEC). There is also a Cl(-1) ion associated with D1 and D2, which is required for oxygen evolution. The PSII complex binds additional chlorophylls, carotenoids and specific lipids. as a cofactor. In terms of processing, tyr-161 forms a radical intermediate that is referred to as redox-active TyrZ, YZ or Y-Z. Post-translationally, C-terminally processed by CtpA; processing is essential to allow assembly of the oxygen-evolving complex and thus photosynthetic growth.

The protein resides in the cellular thylakoid membrane. The enzyme catalyses 2 a plastoquinone + 4 hnu + 2 H2O = 2 a plastoquinol + O2. In terms of biological role, photosystem II (PSII) is a light-driven water:plastoquinone oxidoreductase that uses light energy to abstract electrons from H(2)O, generating O(2) and a proton gradient subsequently used for ATP formation. It consists of a core antenna complex that captures photons, and an electron transfer chain that converts photonic excitation into a charge separation. The D1/D2 (PsbA/PsbD) reaction center heterodimer binds P680, the primary electron donor of PSII as well as several subsequent electron acceptors. This is Photosystem II protein D1 2 from Synechococcus sp. (strain CC9311).